We begin with the raw amino-acid sequence, 249 residues long: Ribosomal RNA small subunit methyltransferase G (249 aa).

S-adenosyl-L-methionine contacts are provided by residues glycine 88, phenylalanine 93, 111 to 113, 139 to 140, and arginine 158; these read DAT and AE. Residues cysteine 164 and cysteine 249 are joined by a disulfide bond. Positions 245–246 are RNA binding; sequence RH.

This sequence belongs to the methyltransferase superfamily. RNA methyltransferase RsmG family.

It localises to the cytoplasm. The catalysed reaction is guanosine(527) in 16S rRNA + S-adenosyl-L-methionine = N(7)-methylguanosine(527) in 16S rRNA + S-adenosyl-L-homocysteine. Its function is as follows. Specifically methylates the N7 position of guanine in position 527 of 16S rRNA. Shows a marked preference for deproteinized 16S rRNA as substrate and is completely inactive with native 30S subunits as substrate. In Thermus thermophilus (strain ATCC 27634 / DSM 579 / HB8), this protein is Ribosomal RNA small subunit methyltransferase G.